A 480-amino-acid polypeptide reads, in one-letter code: UDP-N-acetylmuramate--L-alanine ligase (480 aa).

126–132 is a binding site for ATP; that stretch reads GTHGKTT.

Belongs to the MurCDEF family.

It localises to the cytoplasm. It catalyses the reaction UDP-N-acetyl-alpha-D-muramate + L-alanine + ATP = UDP-N-acetyl-alpha-D-muramoyl-L-alanine + ADP + phosphate + H(+). It participates in cell wall biogenesis; peptidoglycan biosynthesis. Cell wall formation. The chain is UDP-N-acetylmuramate--L-alanine ligase from Blochmanniella pennsylvanica (strain BPEN).